The chain runs to 762 residues: Pyrophosphate-energized vacuolar membrane proton pump (762 aa).

Topologically, residues 1–6 (MAILGE) are intravacuolar. Residues 7–33 (LGTEILIPVCGVIGIVFAVAQWFIVSK) form a helical membrane-spanning segment. Topologically, residues 34–81 (VKVTPGAASAAAGAKNGYGDYLIEEEEGLNDHNVVVKCAEIQTAISEG) are cytoplasmic. A helical transmembrane segment spans residues 82–111 (ATSFLFTMYQYVGMFMVVFAAIIFLFLGSI). Residues 112 to 131 (EGFSTKGQPCTYSKGTCKPA) are Intravacuolar-facing. A disulfide bridge connects residues C121 and C128. A helical membrane pass occupies residues 132 to 159 (LYTALFSTASFLLGAITSLVSGFLGMKI). The Cytoplasmic segment spans residues 160–182 (ATYANARTTLEARKGVGKAFITA). The chain crosses the membrane as a helical span at residues 183–212 (FRSGAVMGFLLSSSGLVVLYITINVFKMYY). Over 213 to 215 (GDD) the chain is Intravacuolar. The helical transmembrane segment at 216-244 (WEGLFESITGYGLGGSSMALFGRVGGGIY) threads the bilayer. Residues 245-282 (TKAADVGADLVGKVERNIPEDDPRNPAVIADNVGDNVG) are Cytoplasmic-facing. Residue K246 coordinates substrate. Mg(2+) contacts are provided by D249, D253, and D279. The helical transmembrane segment at 283–308 (DIAGMGSDLFGSYAESSCAALVVASI) threads the bilayer. The Intravacuolar segment spans residues 309–316 (SSFGINHD). Residues 317–342 (FTAMCYPLLVSSVGIIVCLLTTLFAT) traverse the membrane as a helical segment. Residues 343 to 350 (DFFEIKAA) lie on the Cytoplasmic side of the membrane. Residues 351–378 (NEIEPALKKQLIISTALMTVGVAVISWL) form a helical membrane-spanning segment. The Intravacuolar segment spans residues 379–397 (ALPAKFTIFNFGAQKEVSN). The helical transmembrane segment at 398 to 421 (WGLFFCVAVGLWAGLIIGFVTEYY) threads the bilayer. Over 422 to 443 (TSNAYSPVQDVADSCRTGAATN) the chain is Cytoplasmic. A helical membrane pass occupies residues 444-468 (VIFGLALGYKSVIIPIFAIAVSIYV). At 469–474 (SFSIAA) the chain is on the intravacuolar side. Residues 475–501 (MYGIAMAALGMLSTMATGLAIDAYGPI) traverse the membrane as a helical segment. At 502 to 530 (SDNAGGIAEMAGMSHRIRERTDALDAAGN) the chain is on the cytoplasmic side. Mg(2+) is bound by residues D503 and N530. The helical transmembrane segment at 531-559 (TTAAIGKGFAIGSAALVSLALFGAFVSRA) threads the bilayer. At 560 to 569 (GVKVVDVLSP) the chain is on the intravacuolar side. A helical transmembrane segment spans residues 570–598 (KVFIGLIVGAMLPYWFSAMTMKSVGSAAL). Topologically, residues 599–627 (KMVEEVRRQFNTIPGLMEGTAKPDYATCV) are cytoplasmic. The chain crosses the membrane as a helical span at residues 628–656 (KISTDASIKEMIPPGALVMLTPLIVGTLF). A topological domain (intravacuolar) is located at residue G657. The chain crosses the membrane as a helical span at residues 658-685 (VETLSGVLAGALVSGVQIAISASNTGGA). At 686–728 (WDNAKKYIEAGNSEHARSLGPKGSDCHKAAVIGDTIGDPLKDT) the chain is on the cytoplasmic side. Residues D687 and D723 each coordinate Mg(2+). K726 is a substrate binding site. Residues 729–754 (SGPSLNILIKLMAVESLVFAPFFATY) form a helical membrane-spanning segment. The Intravacuolar segment spans residues 755-762 (GGLLFKYI).

The protein belongs to the H(+)-translocating pyrophosphatase (TC 3.A.10) family. K(+)-stimulated subfamily. In terms of assembly, monomer.

The protein localises to the vacuole membrane. It catalyses the reaction diphosphate + H2O + H(+)(in) = 2 phosphate + 2 H(+)(out). In terms of biological role, contributes to the transtonoplast (from cytosol to vacuole lumen) H(+)-electrochemical potential difference. It establishes a proton gradient of similar and often greater magnitude than the H(+)-ATPase on the same membrane. This chain is Pyrophosphate-energized vacuolar membrane proton pump, found in Hordeum vulgare (Barley).